The sequence spans 156 residues: Deoxyuridine 5'-triphosphate nucleotidohydrolase (156 aa).

Residues 76 to 78 (RSG), Asn89, 93 to 95 (TVD), and Lys103 contribute to the substrate site.

Belongs to the dUTPase family. The cofactor is Mg(2+).

It catalyses the reaction dUTP + H2O = dUMP + diphosphate + H(+). It participates in pyrimidine metabolism; dUMP biosynthesis; dUMP from dCTP (dUTP route): step 2/2. Its function is as follows. This enzyme is involved in nucleotide metabolism: it produces dUMP, the immediate precursor of thymidine nucleotides and it decreases the intracellular concentration of dUTP so that uracil cannot be incorporated into DNA. The protein is Deoxyuridine 5'-triphosphate nucleotidohydrolase of Rhizobium johnstonii (strain DSM 114642 / LMG 32736 / 3841) (Rhizobium leguminosarum bv. viciae).